Consider the following 178-residue polypeptide: Large ribosomal subunit protein uL6 (178 aa).

This sequence belongs to the universal ribosomal protein uL6 family. In terms of assembly, part of the 50S ribosomal subunit.

Functionally, this protein binds to the 23S rRNA, and is important in its secondary structure. It is located near the subunit interface in the base of the L7/L12 stalk, and near the tRNA binding site of the peptidyltransferase center. The chain is Large ribosomal subunit protein uL6 from Streptococcus uberis (strain ATCC BAA-854 / 0140J).